A 226-amino-acid polypeptide reads, in one-letter code: Glycerol-3-phosphate acyltransferase (226 aa).

Helical transmembrane passes span 1–21, 60–80, 102–122, 134–154, 159–178, and 182–197; these read MGFW…LGSF, FVLG…YYLF, LVTL…FLGF, ILLA…AVVV, IVSL…MVFL, and LPYI…YVIL.

The protein belongs to the PlsY family. In terms of assembly, probably interacts with PlsX.

It localises to the cell inner membrane. The catalysed reaction is an acyl phosphate + sn-glycerol 3-phosphate = a 1-acyl-sn-glycero-3-phosphate + phosphate. Its pathway is lipid metabolism; phospholipid metabolism. Functionally, catalyzes the transfer of an acyl group from acyl-phosphate (acyl-PO(4)) to glycerol-3-phosphate (G3P) to form lysophosphatidic acid (LPA). This enzyme utilizes acyl-phosphate as fatty acyl donor, but not acyl-CoA or acyl-ACP. This chain is Glycerol-3-phosphate acyltransferase, found in Nostoc sp. (strain PCC 7120 / SAG 25.82 / UTEX 2576).